We begin with the raw amino-acid sequence, 365 residues long: MNLLTMSTELIYIFLFSMAFLFVARKVAIKIGLVDKPNYRKRHQGLIPLVGGISVFAGVCFAFLITNQQIPHFRLYLACAGLLVFVGALDDRFDISVKIRAFVQALVGIAMMAVAGLYLRSLGHAFGPWEMVLGPFGYVVTLFAVWAAINAFNMVDGIDGLLGGLSCVSFGAMGILLYQSGQMSLALWCFAMIATIIPYILLNLGLLGRRYKVFMGDAGSTLIGFTAIWILLQATQGNAHPINPVTALWIIAIPLMDMIAIMYRRLRKGMSPFSPDRQHIHHLIMRAGFTSRQAFVLITLAAALLAMIGVIGERLTFIPEWVMLALFLLAFLLYGYCIKRAWRVARFIKRFKRRMRRASKNKHES.

Helical transmembrane passes span 3–23 (LLTM…FLFV), 45–65 (GLIP…AFLI), 99–119 (IRAF…GLYL), 132–152 (VLGP…INAF), 157–177 (GIDG…GILL), 187–207 (LWCF…LGLL), 213–233 (VFMG…ILLQ), 242–262 (INPV…IAIM), 293–313 (QAFV…VIGE), and 315–335 (LTFI…LLYG).

It belongs to the glycosyltransferase 4 family. WecA subfamily. Mg(2+) serves as cofactor. It depends on Mn(2+) as a cofactor.

The protein resides in the cell inner membrane. The catalysed reaction is di-trans,octa-cis-undecaprenyl phosphate + UDP-N-acetyl-alpha-D-glucosamine = N-acetyl-alpha-D-glucosaminyl-di-trans,octa-cis-undecaprenyl diphosphate + UMP. Its pathway is bacterial outer membrane biogenesis; LPS O-antigen biosynthesis. The protein operates within bacterial outer membrane biogenesis; enterobacterial common antigen biosynthesis. In terms of biological role, catalyzes the transfer of the GlcNAc-1-phosphate moiety from UDP-GlcNAc onto the carrier lipid undecaprenyl phosphate (C55-P), yielding GlcNAc-pyrophosphoryl-undecaprenyl (GlcNAc-PP-C55). The protein is Undecaprenyl-phosphate alpha-N-acetylglucosaminyl 1-phosphate transferase of Yersinia pestis.